We begin with the raw amino-acid sequence, 102 residues long: Monothiol glutaredoxin-S10 (102 aa).

One can recognise a Glutaredoxin domain in the interval 1–101 (MDVVARLASQ…ILLKEAGALW (101 aa)). [2Fe-2S] cluster is bound at residue cysteine 21. The Responsive for interaction with TGA factors motif lies at 99-102 (ALWL).

Belongs to the glutaredoxin family. CC-type subfamily.

Its subcellular location is the cytoplasm. It is found in the nucleus. Its function is as follows. May only reduce GSH-thiol disulfides, but not protein disulfides. This chain is Monothiol glutaredoxin-S10 (GRXS10), found in Arabidopsis thaliana (Mouse-ear cress).